Consider the following 595-residue polypeptide: Aspartate--tRNA ligase (595 aa).

Position 173 (glutamate 173) interacts with L-aspartate. The tract at residues 197-200 (QLFK) is aspartate. Residue arginine 219 coordinates L-aspartate. Residues 219–221 (RDE) and glutamine 228 contribute to the ATP site. Position 449 (histidine 449) interacts with L-aspartate. ATP is bound at residue glutamate 483. Residue arginine 490 coordinates L-aspartate. 535–538 (GLDR) provides a ligand contact to ATP.

The protein belongs to the class-II aminoacyl-tRNA synthetase family. Type 1 subfamily. Homodimer.

It is found in the cytoplasm. It catalyses the reaction tRNA(Asp) + L-aspartate + ATP = L-aspartyl-tRNA(Asp) + AMP + diphosphate. Functionally, catalyzes the attachment of L-aspartate to tRNA(Asp) in a two-step reaction: L-aspartate is first activated by ATP to form Asp-AMP and then transferred to the acceptor end of tRNA(Asp). The protein is Aspartate--tRNA ligase of Shewanella woodyi (strain ATCC 51908 / MS32).